Reading from the N-terminus, the 227-residue chain is Protein CAP22 (227 aa).

N-linked (GlcNAc...) asparagine glycans are attached at residues N55 and N72. The segment at 143 to 162 is disordered; sequence TTIGGGATPAPTSERSRTSD.

It localises to the secreted. It is found in the cell wall. This Colletotrichum gloeosporioides (Anthracnose fungus) protein is Protein CAP22 (CAP22).